A 221-amino-acid polypeptide reads, in one-letter code: Iron-sulfur cluster repair protein YtfE (221 aa).

The protein belongs to the RIC family. YtfE subfamily. As to quaternary structure, homodimer.

It localises to the cytoplasm. Di-iron-containing protein involved in the repair of iron-sulfur clusters damaged by oxidative and nitrosative stress conditions. This chain is Iron-sulfur cluster repair protein YtfE, found in Yersinia pseudotuberculosis serotype O:1b (strain IP 31758).